The following is a 949-amino-acid chain: MTPVAVTSVAPVDIIHDLKRPKRATESSPITLPDVFSRAVSQYPNHELSFITSSVHDSSMHTTTFTEFNQRVRALAQAMLAWDKPAGAVIVIYLTEHEDNVAAVWACLLSGYVPCLQPALSAQQAHKEGHVAHIKNLFSSATWLTNESGAEQVQSISGLDIHLLSELKASAGVGMDFSAHQPNPDDEAILFLTSGSTGFSKAVVHTHRTILAACHAKGENYGLTSESKIMNWVGFDHVAGSLEMHIAPLLYGASQLHVHVSAILSDPLCFLRLIEENSIQLAFASNFLLAKLTRDLEKRSDLFGKFDLSSIKRINSGGEAVVSSTAQAFARTLKNLAKDGDASFVISAGFGMTETCAGCIYDSINVLETPPSYEFLELGTPVTGCEMRVVNPEDGVTPRPDGESGELQVRGPMVFVRYYNNPEATSSSFVEGGWYRTGDVGIVEKGKMRLSGRIKDTVVVHGVSYGIPELETYLQTVEGVTHSFLAAAPYRAPGQETEGFVVFYSPTFGLDSEDAPVKLYATHCAIRDVSVKLITLPPQQIIPIPINQMERTTLGKLSRARLVNMFKQGELAKHIDRAKELIGIARGASFVALSTETEKTLAGIYAVILDLSVGDMSANDNLFELGGTSIDVIRLKREGESAFDLPEIPTIRILKHPVISNLAKYVDSLVSKDVSEEEYDPIVPLQLTGKKTPIFMVHPGMADVLIFVNLAKYFQNERPFYALRARGFEPGQPFFTTTGEIVSCYTAAVKRTQPHGPYAIAGYSYGGVIAFEIAKRLEAMGDEVKFTGVIDIIAHRARENDLTLGLLTLSHLLGLVSKQDINDLAPSMRPLTRKEQLELVWKLSPPERLVELQLTPEKLKHWVNVSGSLMECGKDYEPASSVSVMDVFYANPSRGSKEAWLHRLKRWTDYSRSEPSYIDVPGHHYTLMDFDHVARFQKIFRARLEARGL.

The adenylation (A) domain stretch occupies residues 38–460; it reads RAVSQYPNHE…SGRIKDTVVV (423 aa). The region spanning 592 to 670 is the Carrier domain; that stretch reads ALSTETEKTL…NLAKYVDSLV (79 aa). The segment at 597–667 is thiolation and peptide carrier (T) domain; the sequence is TEKTLAGIYA…VISNLAKYVD (71 aa). Residue Ser-629 is modified to O-(pantetheine 4'-phosphoryl)serine. The tract at residues 693–934 is thioesterase (TE) domain; the sequence is PIFMVHPGMA…YTLMDFDHVA (242 aa).

This sequence belongs to the ATP-dependent AMP-binding enzyme family.

Its function is as follows. Inactive atromentin synthetase homolog. While the invA3 adenylation (A) domain is capable of adenylating 4-hydroxyphenylpyruvate (4-HPP), the invA3 enzyme is inactive because of its non-functional thioesterase (TE) domain. The polypeptide is Inactive atromentin synthetase invA3 (invA3) (Paxillus involutus (Naked brimcap)).